The following is a 147-amino-acid chain: Neocarzinostatin (147 aa).

An N-terminal signal peptide occupies residues 1–34 (MVPISIIRNRVAKVAVGSAAVLGLAVGFQTPAVA). 2 disulfides stabilise this stretch: Cys-71-Cys-81 and Cys-122-Cys-127.

It belongs to the neocarzinostatin family.

Functionally, NCS has antibiotic activity (for Gram-positive bacteria) and antitumor activity (for certain mouse tumors). NCS binds non-covalently to a chromophore which is the cytotoxic and mutagenic component of the antibiotic. The chromophore binds to DNA as a weak intercalator and causes single- and double-strand breaks. This Streptomyces carzinostaticus protein is Neocarzinostatin (ncsA).